A 621-amino-acid polypeptide reads, in one-letter code: DNA mismatch repair protein MutL (621 aa).

Belongs to the DNA mismatch repair MutL/HexB family.

This protein is involved in the repair of mismatches in DNA. It is required for dam-dependent methyl-directed DNA mismatch repair. May act as a 'molecular matchmaker', a protein that promotes the formation of a stable complex between two or more DNA-binding proteins in an ATP-dependent manner without itself being part of a final effector complex. The sequence is that of DNA mismatch repair protein MutL from Xylella fastidiosa (strain M12).